Consider the following 439-residue polypeptide: Probable anion transporter 7 (439 aa).

Positions 1–28 are cleaved as a signal peptide; that stretch reads MTALTRMKFPKRYVIVLLTFICTNVCYI. The next 11 helical transmembrane spans lie at 53-73, 81-101, 104-124, 143-163, 167-187, 232-252, 280-300, 312-332, 338-358, 367-387, and 412-432; these read MILSMFYYGYVLSQIPGGWAA, VLLLSFVLWSLICGLIPLDPK, VILVLSRLFVGVAQGFIFPAI, LTTSGMYLGAAGGMLFFPSLV, GAQSVFFVEAVLGVAWSVIWL, IIFSLPVWAIVVNNFTFHYAL, LPYFNMFIFSNIGGVVADHLI, KLLNTIGFVVSAVALMALPLF, TVLCSSISLGFLALGRAGFAV, FAGIVMGVSNTAGTLAGIVGV, and TVFFVPGYLCIFSSIIFLIFS.

This sequence belongs to the major facilitator superfamily. Sodium/anion cotransporter (TC 2.A.1.14) family.

It localises to the cell membrane. In terms of biological role, probable anion transporter. The polypeptide is Probable anion transporter 7 (PHT4;7) (Oryza sativa subsp. japonica (Rice)).